The chain runs to 622 residues: Chaperone protein HscA homolog (622 aa).

It belongs to the heat shock protein 70 family.

In terms of biological role, chaperone involved in the maturation of iron-sulfur cluster-containing proteins. Has a low intrinsic ATPase activity which is markedly stimulated by HscB. In Burkholderia thailandensis (strain ATCC 700388 / DSM 13276 / CCUG 48851 / CIP 106301 / E264), this protein is Chaperone protein HscA homolog.